A 217-amino-acid chain; its full sequence is Phosphoribosylformylglycinamidine synthase subunit PurQ (217 aa).

The 216-residue stretch at Ser-2–Ser-217 folds into the Glutamine amidotransferase type-1 domain. Cys-86 serves as the catalytic Nucleophile. Catalysis depends on residues His-194 and Glu-196.

In terms of assembly, part of the FGAM synthase complex composed of 1 PurL, 1 PurQ and 2 PurS subunits.

The protein localises to the cytoplasm. The catalysed reaction is N(2)-formyl-N(1)-(5-phospho-beta-D-ribosyl)glycinamide + L-glutamine + ATP + H2O = 2-formamido-N(1)-(5-O-phospho-beta-D-ribosyl)acetamidine + L-glutamate + ADP + phosphate + H(+). The enzyme catalyses L-glutamine + H2O = L-glutamate + NH4(+). It functions in the pathway purine metabolism; IMP biosynthesis via de novo pathway; 5-amino-1-(5-phospho-D-ribosyl)imidazole from N(2)-formyl-N(1)-(5-phospho-D-ribosyl)glycinamide: step 1/2. Part of the phosphoribosylformylglycinamidine synthase complex involved in the purines biosynthetic pathway. Catalyzes the ATP-dependent conversion of formylglycinamide ribonucleotide (FGAR) and glutamine to yield formylglycinamidine ribonucleotide (FGAM) and glutamate. The FGAM synthase complex is composed of three subunits. PurQ produces an ammonia molecule by converting glutamine to glutamate. PurL transfers the ammonia molecule to FGAR to form FGAM in an ATP-dependent manner. PurS interacts with PurQ and PurL and is thought to assist in the transfer of the ammonia molecule from PurQ to PurL. This Parasynechococcus marenigrum (strain WH8102) protein is Phosphoribosylformylglycinamidine synthase subunit PurQ.